Here is a 495-residue protein sequence, read N- to C-terminus: Probable cytochrome P450 508C1 (495 aa).

The chain crosses the membrane as a helical span at residues 3–21 (LLNSLLLLFLIYLIHSFYI). Cys-442 contacts heme.

Belongs to the cytochrome P450 family. Requires heme as cofactor.

It localises to the membrane. This chain is Probable cytochrome P450 508C1 (cyp508C1), found in Dictyostelium discoideum (Social amoeba).